We begin with the raw amino-acid sequence, 341 residues long: Mediator of RNA polymerase II transcription subunit 18 (341 aa).

Residues 139 to 216 (KVMDKEKVQS…KEHSEGNASQ (78 aa)) form a disordered region. The span at 163-211 (EDKKENIKKEESGEEVKGSGEEVKGSGEEVKGSGEEAKKSGEEAKEHSE) shows a compositional bias: basic and acidic residues.

It belongs to the Mediator complex subunit 18 family. As to quaternary structure, component of the Mediator complex.

Its subcellular location is the nucleus. Component of the Mediator complex, a coactivator involved in the regulated transcription of nearly all RNA polymerase II-dependent genes. Mediator functions as a bridge to convey information from gene-specific regulatory proteins to the basal RNA polymerase II transcription machinery. Mediator is recruited to promoters by direct interactions with regulatory proteins and serves as a scaffold for the assembly of a functional preinitiation complex with RNA polymerase II and the general transcription factors. In Debaryomyces hansenii (strain ATCC 36239 / CBS 767 / BCRC 21394 / JCM 1990 / NBRC 0083 / IGC 2968) (Yeast), this protein is Mediator of RNA polymerase II transcription subunit 18 (SRB5).